Consider the following 137-residue polypeptide: Small ribosomal subunit protein uS8 (137 aa).

It belongs to the universal ribosomal protein uS8 family. As to quaternary structure, part of the 30S ribosomal subunit. Contacts proteins S5 and S12.

One of the primary rRNA binding proteins, it binds directly to 16S rRNA central domain where it helps coordinate assembly of the platform of the 30S subunit. In Metamycoplasma arthritidis (strain 158L3-1) (Mycoplasma arthritidis), this protein is Small ribosomal subunit protein uS8.